We begin with the raw amino-acid sequence, 419 residues long: Transcription termination factor Rho (419 aa).

A Rho RNA-BD domain is found at 48 to 123 (EISGDGVLEI…LKVDSINFDR (76 aa)). RNA-binding stretches follow at residues 61 to 66 (GFGFLR), 78 to 80 (DIY), and 108 to 110 (ERY). ATP contacts are provided by residues 169–174 (GKGQRG), 181–186 (KAGKTI), and Arg212. An RNA-binding 2 region spans residues 284–288 (VLTGG).

This sequence belongs to the Rho family. Homohexamer. The homohexamer assembles into an open ring structure.

Functionally, facilitates transcription termination by a mechanism that involves Rho binding to the nascent RNA, activation of Rho's RNA-dependent ATPase activity, and release of the mRNA from the DNA template. This chain is Transcription termination factor Rho, found in Pseudomonas aeruginosa (strain ATCC 15692 / DSM 22644 / CIP 104116 / JCM 14847 / LMG 12228 / 1C / PRS 101 / PAO1).